The primary structure comprises 410 residues: Neuroserpin (410 aa).

Residues 1-16 (MTYLELLALLALQSVV) form the signal peptide. N-linked (GlcNAc...) asparagine glycans are attached at residues asparagine 157, asparagine 321, and asparagine 401. Serine 403 is a glycosylation site (O-linked (Xyl...) (chondroitin sulfate) serine).

The protein belongs to the serpin family. Detected in neurons in embryonic brain cortex (at protein level). During embryonic development mostly expressed in CNS. In adult expressed in brain and much less in spinal cord, heart, kidney and testis.

Its subcellular location is the secreted. The protein localises to the cytoplasmic vesicle. The protein resides in the secretory vesicle lumen. It is found in the perikaryon. Functionally, serine protease inhibitor that inhibits plasminogen activators and plasmin but not thrombin. May be involved in the formation or reorganization of synaptic connections as well as for synaptic plasticity in the adult nervous system. May protect neurons from cell damage by tissue-type plasminogen activator. The protein is Neuroserpin (Serpini1) of Mus musculus (Mouse).